The sequence spans 215 residues: Pyrrolidone-carboxylate peptidase (215 aa).

Active-site residues include Glu80, Cys143, and His167.

This sequence belongs to the peptidase C15 family. As to quaternary structure, homotetramer.

The protein resides in the cytoplasm. The catalysed reaction is Release of an N-terminal pyroglutamyl group from a polypeptide, the second amino acid generally not being Pro.. Removes 5-oxoproline from various penultimate amino acid residues except L-proline. This chain is Pyrrolidone-carboxylate peptidase, found in Bacillus cereus (strain 03BB102).